Here is a 141-residue protein sequence, read N- to C-terminus: Early nodulin-like protein 19 (141 aa).

The first 26 residues, M1–A26, serve as a signal peptide directing secretion. One can recognise a Phytocyanin domain in the interval K27–T127. N42 and N88 each carry an N-linked (GlcNAc...) asparagine glycan. C80 and C115 are oxidised to a cystine.

It belongs to the early nodulin-like (ENODL) family.

May act as a carbohydrate transporter. The sequence is that of Early nodulin-like protein 19 from Arabidopsis thaliana (Mouse-ear cress).